The primary structure comprises 202 residues: MLELLKVSITGDLSSGKTEACRVFQELGAYVISADKVSHSFLVPHSHIGRRVIDLLGPEVVIDNTFDRKVIAEKVFGNLDLLQALEAILHPEVCRIIEEQYCQVAKERKYPLFIAEVPLLYEIHYARWFDRVILITADENIRRERFTKKTNCSDLNFYQRCARFSSHEEKMMHADIVIENNGTKEELRHKVEEYFYALKGAL.

Positions 6–202 constitute a DPCK domain; it reads KVSITGDLSS…EYFYALKGAL (197 aa). 14–19 provides a ligand contact to ATP; that stretch reads SSGKTE.

The protein belongs to the CoaE family.

The protein localises to the cytoplasm. The catalysed reaction is 3'-dephospho-CoA + ATP = ADP + CoA + H(+). It functions in the pathway cofactor biosynthesis; coenzyme A biosynthesis; CoA from (R)-pantothenate: step 5/5. Its function is as follows. Catalyzes the phosphorylation of the 3'-hydroxyl group of dephosphocoenzyme A to form coenzyme A. This chain is Dephospho-CoA kinase, found in Chlamydia abortus (strain DSM 27085 / S26/3) (Chlamydophila abortus).